A 528-amino-acid chain; its full sequence is Chaperonin GroEL, chloroplastic (528 aa).

ATP contacts are provided by residues 29–32 (TLGP), 86–90 (DGTTT), G414, 480–482 (DAA), and D496.

The protein belongs to the chaperonin (HSP60) family. As to quaternary structure, forms a cylinder of 14 subunits composed of two heptameric rings stacked back-to-back. Interacts with the co-chaperonin GroES.

Its subcellular location is the plastid. It is found in the chloroplast. The catalysed reaction is ATP + H2O + a folded polypeptide = ADP + phosphate + an unfolded polypeptide.. Together with its co-chaperonin GroES, plays an essential role in assisting protein folding. The GroEL-GroES system forms a nano-cage that allows encapsulation of the non-native substrate proteins and provides a physical environment optimized to promote and accelerate protein folding. This is Chaperonin GroEL, chloroplastic from Pyropia yezoensis (Susabi-nori).